The chain runs to 269 residues: Regulatory protein RecX (269 aa).

This sequence belongs to the RecX family.

It is found in the cytoplasm. Modulates RecA activity. In Listeria monocytogenes serotype 4b (strain F2365), this protein is Regulatory protein RecX.